The sequence spans 426 residues: Enolase (426 aa).

Residue Gln-163 participates in (2R)-2-phosphoglycerate binding. Glu-205 functions as the Proton donor in the catalytic mechanism. Asp-242, Glu-285, and Asp-312 together coordinate Mg(2+). Lys-337, Arg-366, Ser-367, and Lys-388 together coordinate (2R)-2-phosphoglycerate. Lys-337 serves as the catalytic Proton acceptor.

The protein belongs to the enolase family. The cofactor is Mg(2+).

The protein resides in the cytoplasm. The protein localises to the secreted. It localises to the cell surface. The enzyme catalyses (2R)-2-phosphoglycerate = phosphoenolpyruvate + H2O. It functions in the pathway carbohydrate degradation; glycolysis; pyruvate from D-glyceraldehyde 3-phosphate: step 4/5. Functionally, catalyzes the reversible conversion of 2-phosphoglycerate (2-PG) into phosphoenolpyruvate (PEP). It is essential for the degradation of carbohydrates via glycolysis. This chain is Enolase, found in Gluconacetobacter diazotrophicus (strain ATCC 49037 / DSM 5601 / CCUG 37298 / CIP 103539 / LMG 7603 / PAl5).